The primary structure comprises 426 residues: Glutamate-1-semialdehyde 2,1-aminomutase (426 aa).

K263 carries the post-translational modification N6-(pyridoxal phosphate)lysine.

This sequence belongs to the class-III pyridoxal-phosphate-dependent aminotransferase family. HemL subfamily. In terms of assembly, homodimer. It depends on pyridoxal 5'-phosphate as a cofactor.

It localises to the cytoplasm. The enzyme catalyses (S)-4-amino-5-oxopentanoate = 5-aminolevulinate. The protein operates within porphyrin-containing compound metabolism; protoporphyrin-IX biosynthesis; 5-aminolevulinate from L-glutamyl-tRNA(Glu): step 2/2. The sequence is that of Glutamate-1-semialdehyde 2,1-aminomutase from Caldicellulosiruptor bescii (strain ATCC BAA-1888 / DSM 6725 / KCTC 15123 / Z-1320) (Anaerocellum thermophilum).